A 287-amino-acid chain; its full sequence is Inorganic pyrophosphatase (287 aa).

Residue R79 participates in diphosphate binding. Residues D116, D121, and D153 each contribute to the Mg(2+) site.

Belongs to the PPase family. It depends on Mg(2+) as a cofactor.

The protein resides in the cytoplasm. It catalyses the reaction diphosphate + H2O = 2 phosphate + H(+). The chain is Inorganic pyrophosphatase (IPP1) from Candida glabrata (strain ATCC 2001 / BCRC 20586 / JCM 3761 / NBRC 0622 / NRRL Y-65 / CBS 138) (Yeast).